A 427-amino-acid polypeptide reads, in one-letter code: Serine--tRNA ligase (427 aa).

L-serine is bound at residue 229 to 231; sequence TAE. Position 260 to 262 (260 to 262) interacts with ATP; it reads RSE. Glu-283 serves as a coordination point for L-serine. 347–350 is a binding site for ATP; the sequence is EISS. Ser-383 contacts L-serine.

Belongs to the class-II aminoacyl-tRNA synthetase family. Type-1 seryl-tRNA synthetase subfamily. As to quaternary structure, homodimer. The tRNA molecule binds across the dimer.

It localises to the cytoplasm. The catalysed reaction is tRNA(Ser) + L-serine + ATP = L-seryl-tRNA(Ser) + AMP + diphosphate + H(+). It carries out the reaction tRNA(Sec) + L-serine + ATP = L-seryl-tRNA(Sec) + AMP + diphosphate + H(+). The protein operates within aminoacyl-tRNA biosynthesis; selenocysteinyl-tRNA(Sec) biosynthesis; L-seryl-tRNA(Sec) from L-serine and tRNA(Sec): step 1/1. Functionally, catalyzes the attachment of serine to tRNA(Ser). Is also able to aminoacylate tRNA(Sec) with serine, to form the misacylated tRNA L-seryl-tRNA(Sec), which will be further converted into selenocysteinyl-tRNA(Sec). The chain is Serine--tRNA ligase from Oleidesulfovibrio alaskensis (strain ATCC BAA-1058 / DSM 17464 / G20) (Desulfovibrio alaskensis).